Reading from the N-terminus, the 501-residue chain is Actin nucleation-promoting factor WASL (501 aa).

N-acetylserine is present on Ser-2. The region spanning 31-138 (LGKKCVTMSS…KAVTDLLGRR (108 aa)) is the WH1 domain. Disordered regions lie at residues 135 to 158 (LGRR…PMAT) and 180 to 202 (SHTK…DIGT). The span at 183 to 195 (KEKKKGKAKKKRL) shows a compositional bias: basic residues. The CRIB domain occupies 200–213 (IGTPSNFQHIGHVG). Ser-239 carries the post-translational modification Phosphoserine; by TNK2. Tyr-253 is modified (phosphotyrosine; by FAK1 and TNK2). Disordered regions lie at residues 263-405 (EAVK…KAAL) and 442-501 (QLKS…EWED). Composition is skewed to pro residues over residues 273–361 (APPP…PPPL) and 368–387 (APPP…PPGL). Residue Arg-304 is modified to Omega-N-methylarginine. WH2 domains lie at 401 to 418 (NKAA…LKKV) and 429 to 446 (GRDA…LKSV). Polar residues predominate over residues 442–453 (QLKSVSDGQEST). Phosphoserine occurs at positions 480 and 481. The span at 482–501 (DEDEDDDDEEDFQDDDEWED) shows a compositional bias: acidic residues.

Binds actin and the Arp2/3 complex. Interacts with CDC42. Interacts with FCHSD1. Interacts with FCHSD2. Binds to SH3 domains of GRB2. Interacts with the C-terminal SH3 domain of DNMBP. Interacts with SNX9. Interacts with the WW domains of PRPF40A/FBP11. Interacts with PTK2/FAK1. Interacts with PACSIN1, PACSIN2 and PACSIN3. Interacts with NOSTRIN. Binds to TNK2. Interacts with SNX33. Interacts with NONO (via second RRM domain); the interaction is direct. Component of a multiprotein complex with NONO and SFPQ; associates with the complex via direct interaction with NONO. Phosphorylation at Ser-239, Tyr-253, Ser-480 and Ser-481 enhances actin polymerization activity.

The protein localises to the cytoplasm. Its subcellular location is the cytoskeleton. It is found in the nucleus. In terms of biological role, regulates actin polymerization by stimulating the actin-nucleating activity of the Arp2/3 complex. Involved in various processes, such as mitosis and cytokinesis, via its role in the regulation of actin polymerization. Together with CDC42, involved in the extension and maintenance of the formation of thin, actin-rich surface projections called filopodia. In addition to its role in the cytoplasm, also plays a role in the nucleus by regulating gene transcription, probably by promoting nuclear actin polymerization. Binds to HSF1/HSTF1 and forms a complex on heat shock promoter elements (HSE) that negatively regulates HSP90 expression. Plays a role in dendrite spine morphogenesis. The polypeptide is Actin nucleation-promoting factor WASL (Wasl) (Rattus norvegicus (Rat)).